Here is a 504-residue protein sequence, read N- to C-terminus: Syntaphilin (504 aa).

Residues 1–74 are disordered; that stretch reads MAMSLQGSRR…HGIKPPTPEQ (74 aa). Low complexity-rich tracts occupy residues 7-26 and 33-49; these read GSRRASAGSRRRTSPPVSVR and SLSSSSNSGSCKGSDSS. Positions 79-161 form a coiled coil; that stretch reads LQQKEVCIRH…VKNNLIDKDK (83 aa). The disordered stretch occupies residues 191–244; it reads VAKEEGTGESAGGSPARSLTRSSTYTKLSDPAVCGDRQAGDPSNTPAEDRADSG. Phosphoserine is present on residues Ser200 and Ser204. Residues 207–217 are compositionally biased toward polar residues; it reads RSLTRSSTYTK. At Thr214 the chain carries Phosphothreonine. Ser219 carries the phosphoserine modification. At Thr235 the chain carries Phosphothreonine. A helical membrane pass occupies residues 437–456; it reads YIVDLLAVVVPAVPTVAWLC.

As to quaternary structure, binds to STX1A. Interacts with DNM1; this interaction inhibits the binding of DNM1 to AMPH and DNM1-receptor-mediated endocytosis.

It is found in the membrane. Its subcellular location is the synapse. The protein localises to the synaptosome. Its function is as follows. Inhibits SNARE complex formation by absorbing free STX1A. The sequence is that of Syntaphilin from Rattus norvegicus (Rat).